The sequence spans 229 residues: DNA polymerase III subunit epsilon (229 aa).

2 residues coordinate a divalent metal cation: D10 and E12. Positions 10, 12, 55, and 60 each coordinate substrate. H156 (proton acceptor) is an active-site residue. Position 161 (D161) interacts with a divalent metal cation. D161 serves as a coordination point for substrate.

DNA polymerase III contains a core (composed of alpha, epsilon and theta chains) that associates with a tau subunit. This core dimerizes to form the POLIII' complex. PolIII' associates with the gamma complex (composed of gamma, delta, delta', psi and chi chains) and with the beta chain to form the complete DNA polymerase III complex. Mg(2+) serves as cofactor. Requires Mn(2+) as cofactor.

It carries out the reaction DNA(n) + a 2'-deoxyribonucleoside 5'-triphosphate = DNA(n+1) + diphosphate. Functionally, DNA polymerase III is a complex, multichain enzyme responsible for most of the replicative synthesis in bacteria. The epsilon subunit contain the editing function and is a proofreading 3'-5' exonuclease. This chain is DNA polymerase III subunit epsilon (dnaQ), found in Rickettsia prowazekii (strain Madrid E).